We begin with the raw amino-acid sequence, 288 residues long: Bis(5'-nucleosyl)-tetraphosphatase, symmetrical (288 aa).

Belongs to the Ap4A hydrolase family.

It carries out the reaction P(1),P(4)-bis(5'-adenosyl) tetraphosphate + H2O = 2 ADP + 2 H(+). In terms of biological role, hydrolyzes diadenosine 5',5'''-P1,P4-tetraphosphate to yield ADP. This is Bis(5'-nucleosyl)-tetraphosphatase, symmetrical from Pseudomonas putida (strain ATCC 700007 / DSM 6899 / JCM 31910 / BCRC 17059 / LMG 24140 / F1).